The following is a 222-amino-acid chain: 2-C-methyl-D-erythritol 2,4-cyclodiphosphate synthase, chloroplastic (222 aa).

The transit peptide at 1–43 directs the protein to the chloroplast; that stretch reads MATASSLFLASPVATAPTARARSTPSASPARPSLRLRRPSTLA. Residues aspartate 73 and histidine 75 each coordinate a divalent metal cation. Substrate is bound by residues 73–75, 99–100, 103–111, 121–123, 126–130, aspartate 130, 165–171, and 196–200; these read DLH, HS, DVLLHCVVD, DIG, FPDSD, LQKPKIS, and AKTHE. Histidine 107 provides a ligand contact to a divalent metal cation.

Belongs to the IspF family. As to quaternary structure, homotrimer. It depends on a divalent metal cation as a cofactor. Expressed in roots, leaves, stems, leaf sheaths and young panicles.

The protein resides in the plastid. Its subcellular location is the chloroplast. The enzyme catalyses 4-CDP-2-C-methyl-D-erythritol 2-phosphate = 2-C-methyl-D-erythritol 2,4-cyclic diphosphate + CMP. It functions in the pathway isoprenoid biosynthesis; isopentenyl diphosphate biosynthesis via DXP pathway; isopentenyl diphosphate from 1-deoxy-D-xylulose 5-phosphate: step 4/6. Its function is as follows. Enzyme of the plastid non-mevalonate pathway for isoprenoid biosynthesis that converts 4-diphosphocytidyl-2C-methyl-D-erythritol 2-phosphate into 2C-methyl-D-erythritol 2,4-cyclodiphosphate and CMP. Is essential for chloroplast development. This chain is 2-C-methyl-D-erythritol 2,4-cyclodiphosphate synthase, chloroplastic, found in Oryza sativa subsp. japonica (Rice).